The following is a 159-amino-acid chain: Transcription elongation factor GreA (159 aa).

Positions 1 to 76 (MAEEKEVVLT…SLEKTLKKAR (76 aa)) form a coiled coil.

The protein belongs to the GreA/GreB family.

Functionally, necessary for efficient RNA polymerase transcription elongation past template-encoded arresting sites. The arresting sites in DNA have the property of trapping a certain fraction of elongating RNA polymerases that pass through, resulting in locked ternary complexes. Cleavage of the nascent transcript by cleavage factors such as GreA or GreB allows the resumption of elongation from the new 3'terminus. GreA releases sequences of 2 to 3 nucleotides. In Syntrophomonas wolfei subsp. wolfei (strain DSM 2245B / Goettingen), this protein is Transcription elongation factor GreA.